The following is a 338-amino-acid chain: Phenylalanine--tRNA ligase alpha subunit (338 aa).

E253 is a Mg(2+) binding site.

Belongs to the class-II aminoacyl-tRNA synthetase family. Phe-tRNA synthetase alpha subunit type 1 subfamily. Tetramer of two alpha and two beta subunits. It depends on Mg(2+) as a cofactor.

It localises to the cytoplasm. It catalyses the reaction tRNA(Phe) + L-phenylalanine + ATP = L-phenylalanyl-tRNA(Phe) + AMP + diphosphate + H(+). This Trichlorobacter lovleyi (strain ATCC BAA-1151 / DSM 17278 / SZ) (Geobacter lovleyi) protein is Phenylalanine--tRNA ligase alpha subunit.